The sequence spans 122 residues: Acidic phospholipase A2 homolog vipoxin A chain (122 aa).

Disulfide bonds link cysteine 26–cysteine 115, cysteine 28–cysteine 44, cysteine 43–cysteine 95, cysteine 49–cysteine 122, cysteine 50–cysteine 88, cysteine 57–cysteine 81, and cysteine 75–cysteine 86.

This sequence belongs to the phospholipase A2 family. Group II subfamily. D49 sub-subfamily. In terms of assembly, heterodimer of A and B (AC P14420) chains; non-covalently linked. The A chain (acidic) is non-toxic, and increases the toxicity of the B chain (basic). The A chain may act as factor stabilizing the complex structure and hence retaining its toxicity by preventing non-specific binding. Upon binding to the target membranes the A chain may dissociate. In terms of tissue distribution, expressed by the venom gland.

The protein resides in the secreted. Functionally, heterodimer: postsynaptic neurotoxin. Monomer: Acidic phospholipase A2 homolog that is non-toxic. This chain is Acidic phospholipase A2 homolog vipoxin A chain, found in Vipera ammodytes meridionalis (Eastern sand viper).